The following is a 138-amino-acid chain: Putative pre-16S rRNA nuclease (138 aa).

This sequence belongs to the YqgF nuclease family.

The protein localises to the cytoplasm. Its function is as follows. Could be a nuclease involved in processing of the 5'-end of pre-16S rRNA. The polypeptide is Putative pre-16S rRNA nuclease (Escherichia coli O7:K1 (strain IAI39 / ExPEC)).